We begin with the raw amino-acid sequence, 375 residues long: tRNA-specific 2-thiouridylase MnmA (375 aa).

Residues glycine 8–serine 15 and methionine 34 each bind ATP. Residues asparagine 104–aspartate 106 are interaction with target base in tRNA. The active-site Nucleophile is the cysteine 109. Cysteine 109 and cysteine 208 are disulfide-bonded. Glycine 134 contacts ATP. An interaction with tRNA region spans residues lysine 158–glutamine 160. Cysteine 208 acts as the Cysteine persulfide intermediate in catalysis. The tract at residues arginine 321–tyrosine 322 is interaction with tRNA.

It belongs to the MnmA/TRMU family.

It localises to the cytoplasm. It carries out the reaction S-sulfanyl-L-cysteinyl-[protein] + uridine(34) in tRNA + AH2 + ATP = 2-thiouridine(34) in tRNA + L-cysteinyl-[protein] + A + AMP + diphosphate + H(+). Its function is as follows. Catalyzes the 2-thiolation of uridine at the wobble position (U34) of tRNA, leading to the formation of s(2)U34. The protein is tRNA-specific 2-thiouridylase MnmA of Mycoplasma mycoides subsp. mycoides SC (strain CCUG 32753 / NCTC 10114 / PG1).